The primary structure comprises 32 residues: Dermaseptin-DA4 (32 aa).

In terms of tissue distribution, expressed by the skin glands.

It localises to the secreted. Its subcellular location is the target cell membrane. Its function is as follows. Antimicrobial peptide with activity against Gram-negative bacteria, but not against Gram-positive bacteria. Active against E.coli (MIC=5 uM), and P.aeruginosa (MIC=40 uM). Acts by disrupting cell membranes. Is able to depolarize membranes of Gram-positive and Gram-negative bacteria. Also acts as a potent chemoattractant for human leukocytes and activates them mainly through a GPCR, possibly FPRL1 coupled to the ERK1/2 MAPK pathway. Is unstructured in water but become helical upon binding to anionic lipids. In contrast to most dermaseptins, is not structured in the presence of zwitterionic lipids. Does not show hemolytic activity. The sequence is that of Dermaseptin-DA4 from Agalychnis dacnicolor (Giant Mexican leaf frog).